The following is a 344-amino-acid chain: Coproporphyrin III ferrochelatase (344 aa).

Residue Ser52 participates in Fe-coproporphyrin III binding. A [2Fe-2S] cluster-binding site is contributed by Cys113. A Fe-coproporphyrin III-binding site is contributed by Tyr116. Residues His172 and Glu255 each contribute to the Fe(2+) site. [2Fe-2S] cluster-binding residues include Cys316, Cys325, and Cys330.

This sequence belongs to the ferrochelatase family. The cofactor is [2Fe-2S] cluster.

The protein resides in the cytoplasm. It carries out the reaction Fe-coproporphyrin III + 2 H(+) = coproporphyrin III + Fe(2+). The protein operates within porphyrin-containing compound metabolism; protoheme biosynthesis. Involved in coproporphyrin-dependent heme b biosynthesis. Catalyzes the insertion of ferrous iron into coproporphyrin III to form Fe-coproporphyrin III. In Mycobacterium bovis (strain ATCC BAA-935 / AF2122/97), this protein is Coproporphyrin III ferrochelatase.